A 240-amino-acid polypeptide reads, in one-letter code: Phosducin-like protein 2 (240 aa).

The Phosducin domain occupies 54–214; sequence QRDKKIDDMS…MLGQAGAVPT (161 aa). A phosphoserine mark is found at Ser-63 and Ser-73. The thioredoxin fold stretch occupies residues 99 to 240; sequence FGSVREISGQ…DLEDKSSDFY (142 aa).

The protein belongs to the phosducin family.

It is found in the cytoplasm. Its function is as follows. Modulates the activation of caspases during apoptosis. This Drosophila melanogaster (Fruit fly) protein is Phosducin-like protein 2.